The primary structure comprises 466 residues: MEGAEGNAGQPGPAERSHRSSVSSVGARAADVLVYLADDTVVPLAVENLSSISAHELHRAVREVLQLPDVALEAFALWLVSPLLEVQLKPKHQPYKLGRQWPELLLRFTNASDDDVAMDEPSLQFRRNVFFPRRRELQIHDEEVLRLLYEEAKGNVLTARYPCDLEDCEVLGGLVCRVQLGPYQPGQPAACTLREKLDSFLPAHLCKRGHGLFAAFRGRGAKTGPGEQGLLNAYRQVKEVTGNNSEREATLGSHYRAYLLKCHELPFYGCAFFHGEVDKPAQGFLHRGGRKPVTVAISLEGVHVIDNREKHVLLGLRFQELSWDHTSPEEEEPVLWLEFDGDSEGTPVNKLLRIYSKQAELMSGLIEYCIELSQAAEPTLSQESASGPHEAPSPSPPPTQRPKLRRQGSVVCSRIQHLSTIDYVEDGKGIKRVKPKRTTSFFSRQLSSSQGSYTVVQPTDDSLEQS.

An N-acetylmethionine modification is found at Met-1. The tract at residues 1-21 is disordered; it reads MEGAEGNAGQPGPAERSHRSS. A Phosphoserine modification is found at Ser-24. Residues 30-377 enclose the FERM domain; it reads ADVLVYLADD…YCIELSQAAE (348 aa). The interval 379-409 is disordered; the sequence is TLSQESASGPHEAPSPSPPPTQRPKLRRQGS. Phosphoserine is present on Ser-384. A compositionally biased stretch (pro residues) spans 391–400; the sequence is APSPSPPPTQ. At Ser-409 the chain carries Phosphoserine. At Thr-420 the chain carries Phosphothreonine. Phosphoserine occurs at positions 440 and 447. Residues 442–460 are compositionally biased toward polar residues; that stretch reads FSRQLSSSQGSYTVVQPTD. The tract at residues 442–466 is disordered; the sequence is FSRQLSSSQGSYTVVQPTDDSLEQS.

In terms of assembly, interacts with iRhom proteins, including iRhom2/RHBDF2 (via cytoplasmic N-termini); this interaction leads to mutual protein stabilization. Interacts with LRP6; this interaction affects LRP6-binding to AXIN1. In terms of tissue distribution, widely expressed (at protein level).

The protein localises to the cytoplasm. Its subcellular location is the cytosol. The protein resides in the cell membrane. In terms of biological role, promotes the cell surface stability of iRhom1/RHBDF1 and iRhom2/RHBDF2 and prevents their degradation via the endolysosomal pathway. By acting on iRhoms, involved in ADAM17-mediated shedding of TNF, amphiregulin/AREG, HBEGF and TGFA from the cell surface. Negatively regulates Wnt signaling, possibly by antagonizing the recruitment of AXIN1 to LRP6. This is FERM domain-containing protein 8 (Frmd8) from Mus musculus (Mouse).